The sequence spans 253 residues: RNA polymerase sigma factor SigI6 (253 aa).

Positions 63–76 match the Polymerase core binding motif; that stretch reads EEYSVALLAFNEAI. The segment at residues 203–222 is a DNA-binding region (H-T-H motif); it reads TLELLKLAKVSRRTIERNKK.

It belongs to the sigma-70 factor family. SigI subfamily. As to quaternary structure, interacts with RsgI6.

It localises to the cytoplasm. With respect to regulation, negatively regulated by the anti-sigma-I factor RsgI6. Binding of the polysaccharide substrate to RsgI6 may lead to the release and activation of SigI6. Sigma factors are initiation factors that promote the attachment of RNA polymerase to specific initiation sites and are then released. This sigma factor is involved in regulation of cellulosomal genes via an external polysaccharide-sensing mechanism. Recognizes the predicted promoters associated with sigI6 itself, xyn11B, xyn10D, xyn10Z, xyn10Y, cel9V, cseP, sigI1, cipA, and rsgI5. The chain is RNA polymerase sigma factor SigI6 from Acetivibrio thermocellus (strain ATCC 27405 / DSM 1237 / JCM 9322 / NBRC 103400 / NCIMB 10682 / NRRL B-4536 / VPI 7372) (Clostridium thermocellum).